A 244-amino-acid chain; its full sequence is Robin (244 aa).

The protein is Robin of Acanthamoeba polyphaga (Amoeba).